The sequence spans 461 residues: MDQSNRYANLNLKESELIAGGRHVLCAYIMKPKAGFGNFIQTAAHFAAESSTGTNVEVSTTDDFTRGVDALVYEVDEANSLMKIAYPIELFDRNVIDGRAMIASFLTLTIGNNQGMGDVEYAKMYDFYVPPAYLKLFDGPSTTIKDLWRVLGRPVINGGFIVGTIIKPKLGLRPQPFANACYDFWLGGDFIKNDEPQGNQVFAPFKDTVRAVADAMRRAQDKTGEAKLFSFNITADDHYEMLARGEFILETFADNADHIAFLVDGYVAGPAAVTTARRAFPKQYLHYHRAGHGAVTSPQSKRGYTAFVLSKMARLQGASGIHTGTMGFGKMEGEAADRAIAYMITEDAADGPYFHQEWLGMNPTTPIISGGMNALRMPGFFDNLGHSNLIMTAGGGAFGHVDGGAAGAKSLRQAEQCWKQGADPVEFAKDHREFARAFESFPQDADKLYPNWRAKLKPQAA.

Asn112 contributes to the substrate binding site. Lys167 acts as the Proton acceptor in catalysis. Lys169 serves as a coordination point for substrate. Mg(2+)-binding residues include Lys192, Asp194, and Glu195. At Lys192 the chain carries N6-carboxylysine. The Proton acceptor role is filled by His288. Arg289, His322, and Ser369 together coordinate substrate.

This sequence belongs to the RuBisCO large chain family. Type II subfamily. Homodimer. Mg(2+) serves as cofactor.

It carries out the reaction 2 (2R)-3-phosphoglycerate + 2 H(+) = D-ribulose 1,5-bisphosphate + CO2 + H2O. The catalysed reaction is D-ribulose 1,5-bisphosphate + O2 = 2-phosphoglycolate + (2R)-3-phosphoglycerate + 2 H(+). Its function is as follows. RuBisCO catalyzes two reactions: the carboxylation of D-ribulose 1,5-bisphosphate, the primary event in carbon dioxide fixation, as well as the oxidative fragmentation of the pentose substrate. Both reactions occur simultaneously and in competition at the same active site. This chain is Ribulose bisphosphate carboxylase, found in Rhodopseudomonas palustris (strain ATCC BAA-98 / CGA009).